The following is a 197-amino-acid chain: Large ribosomal subunit protein bL9 (197 aa).

The interval 178 to 197 is disordered; that stretch reads GEFFDPEAQEDEAAAGETAQ. Over residues 181-191 the composition is skewed to acidic residues; the sequence is FDPEAQEDEAA.

It belongs to the bacterial ribosomal protein bL9 family.

Its function is as follows. Binds to the 23S rRNA. The polypeptide is Large ribosomal subunit protein bL9 (Bradyrhizobium sp. (strain BTAi1 / ATCC BAA-1182)).